The following is a 727-amino-acid chain: Sodium-dependent neutral amino acid transporter SLC6A17 (727 aa).

At 1–68 (MPKNSKVTQR…DRPAWNSKLQ (68 aa)) the chain is on the cytoplasmic side. A phosphoserine mark is found at Ser-13 and Ser-20. The chain crosses the membrane as a helical span at residues 69 to 89 (YILAQIGFSVGLGNIWRFPYL). The Extracellular portion of the chain corresponds to 90–96 (CQKNGGG). Residues 97-116 (AYLVPYLVLLIIIGIPLFFL) form a helical membrane-spanning segment. Over 117 to 140 (ELAVGQRIRRGSIGVWHYVCPRLG) the chain is Cytoplasmic. A helical membrane pass occupies residues 141–161 (GIGFSSCIVCLFVGLYYNVII). Over 162–224 (GWSVFYFFKS…NSISESGGLN (63 aa)) the chain is Extracellular. N-linked (GlcNAc...) asparagine glycosylation occurs at Asn-186. Residues 225–243 (WKMTVCLLVAWSIVGMAVV) traverse the membrane as a helical segment. At 244–251 (KGIQSSGK) the chain is on the cytoplasmic side. The helical transmembrane segment at 252 to 269 (VMYFSSLFPYVVLACFLV) threads the bilayer. The Extracellular portion of the chain corresponds to 270 to 304 (RGLLLRGAVDGILHMFTPKLDKMLDPQVWREAATQ). Residues 305 to 322 (VFFALGLGFGGVIAFSSY) traverse the membrane as a helical segment. Over 323–333 (NKQDNNCHFDA) the chain is Cytoplasmic. Residues 334–355 (ALVSFINFFTSVLATLVVFAVL) form a helical membrane-spanning segment. At 356–451 (GFKANIMNEK…FIAFTEAMTH (96 aa)) the chain is on the extracellular side. The residue at position 377 (Tyr-377) is a Phosphotyrosine. Asn-393 is a glycosylation site (N-linked (GlcNAc...) asparagine). The chain crosses the membrane as a helical span at residues 452–471 (FPASPFWSVMFFLMLINLGL). At 472–494 (GSMIGTMAGITTPIIDTFKVPKE) the chain is on the cytoplasmic side. The chain crosses the membrane as a helical span at residues 495-513 (MFTVGCCVFAFFVGLLFVQ). The Extracellular portion of the chain corresponds to 514–528 (RSGNYFVTMFDDYSA). The chain crosses the membrane as a helical span at residues 529–549 (TLPLTVIVILENIAVAWIYGT). The Cytoplasmic portion of the chain corresponds to 550 to 569 (KKFMQELTEMLGFRPYRFYF). Residues 570–591 (YMWKFVSPLCMAVLTTASIIQL) traverse the membrane as a helical segment. Topologically, residues 592-618 (GVSPPGYSAWIKEEAAERYLYFPNWAM) are extracellular. The helical transmembrane segment at 619 to 641 (ALLITLIAVATLPIPVVFILRHF) threads the bilayer. At 642 to 727 (HLLSDGSNTL…LLASTPESEL (86 aa)) the chain is on the cytoplasmic side. Phosphoserine is present on residues Ser-665 and Ser-701. The disordered stretch occupies residues 680-727 (VPSEAPSPMPTHRSYLGPGSTSPLESSSHPNGRYGSGYLLASTPESEL). Polar residues predominate over residues 698–709 (GSTSPLESSSHP).

Belongs to the sodium:neurotransmitter symporter (SNF) (TC 2.A.22) family. As to expression, found exclusively in the central nervous system and is more abundant in the cerebellum and the cerebral cortex. Expressed in PC-12 cell line.

Its subcellular location is the cytoplasmic vesicle. The protein localises to the secretory vesicle. It localises to the synaptic vesicle membrane. The protein resides in the postsynapse. It is found in the presynapse. It catalyses the reaction L-proline(in) + Na(+)(in) = L-proline(out) + Na(+)(out). It carries out the reaction L-leucine(in) + Na(+)(in) = L-leucine(out) + Na(+)(out). The catalysed reaction is glycine(in) + Na(+)(in) = glycine(out) + Na(+)(out). The enzyme catalyses L-alanine(in) + Na(+)(in) = L-alanine(out) + Na(+)(out). It catalyses the reaction L-glutamine(in) + Na(+)(in) = L-glutamine(out) + Na(+)(out). Functionally, synaptic vesicle transporter with apparent selectivity for neutral amino acids. The transport is sodium-coupled but chloride-independent, likely driven by the proton electrochemical gradient generated by vacuolar H(+)-ATPase in an overall electrogenic mechanism. May contribute to the synaptic uptake of neurotransmitter precursors in a process coupled in part to vesicle exocytosis. The protein is Sodium-dependent neutral amino acid transporter SLC6A17 of Rattus norvegicus (Rat).